The primary structure comprises 230 residues: Orotidine 5'-phosphate decarboxylase (230 aa).

Substrate-binding positions include Asp-11, Lys-34, 61–70 (DLKLHDIPNT), Thr-117, Arg-179, Gln-188, Gly-208, and Arg-209. The Proton donor role is filled by Lys-63.

The protein belongs to the OMP decarboxylase family. Type 1 subfamily. Homodimer.

It carries out the reaction orotidine 5'-phosphate + H(+) = UMP + CO2. It participates in pyrimidine metabolism; UMP biosynthesis via de novo pathway; UMP from orotate: step 2/2. Its function is as follows. Catalyzes the decarboxylation of orotidine 5'-monophosphate (OMP) to uridine 5'-monophosphate (UMP). This is Orotidine 5'-phosphate decarboxylase from Streptococcus pyogenes serotype M18 (strain MGAS8232).